A 346-amino-acid chain; its full sequence is D-alanine--D-alanine ligase (346 aa).

The ATP-grasp domain occupies 134–340 (KFLAESLGVK…IDYTYIHSIQ (207 aa)). 161-212 (EYPVIIKPVRLGSSIGVSIVKSEAELDYALDVAFEFDNDVIVEPFIDGVKEF) is an ATP binding site. Residues D284, E296, and N298 each coordinate Mg(2+).

Belongs to the D-alanine--D-alanine ligase family. Mg(2+) is required as a cofactor. It depends on Mn(2+) as a cofactor.

It localises to the cytoplasm. The catalysed reaction is 2 D-alanine + ATP = D-alanyl-D-alanine + ADP + phosphate + H(+). It functions in the pathway cell wall biogenesis; peptidoglycan biosynthesis. Functionally, cell wall formation. The protein is D-alanine--D-alanine ligase of Sulfurovum sp. (strain NBC37-1).